The primary structure comprises 308 residues: tRNA dimethylallyltransferase (308 aa).

17 to 24 (GPTGSGKS) is a binding site for ATP. 19–24 (TGSGKS) is a substrate binding site.

This sequence belongs to the IPP transferase family. Monomer. Mg(2+) serves as cofactor.

It carries out the reaction adenosine(37) in tRNA + dimethylallyl diphosphate = N(6)-dimethylallyladenosine(37) in tRNA + diphosphate. Its function is as follows. Catalyzes the transfer of a dimethylallyl group onto the adenine at position 37 in tRNAs that read codons beginning with uridine, leading to the formation of N6-(dimethylallyl)adenosine (i(6)A). This is tRNA dimethylallyltransferase from Paenarthrobacter aurescens (strain TC1).